A 390-amino-acid chain; its full sequence is Protein AC109 (390 aa).

Its subcellular location is the host cytoplasm. It is found in the host nucleus. In terms of biological role, plays a role in the transport of the budded virion (BV) to the host nucleus and for occlusion of viral progeny. The sequence is that of Protein AC109 (ORF109) from Lepidoptera (butterflies and moths).